A 78-amino-acid polypeptide reads, in one-letter code: Putative DPH3 homolog B (78 aa).

Residues Phe-4–Asp-60 form the DPH-type MB domain. Positions 26, 28, 48, and 51 each coordinate Zn(2+).

The protein belongs to the DPH3 family.

In Homo sapiens (Human), this protein is Putative DPH3 homolog B (DPH3P1).